We begin with the raw amino-acid sequence, 308 residues long: MTLLSDNKAVLIAGPTASGKSALALELAQKAGAVIINTDSMQVYHDLRVLTARPAPEDEALVPHRLYGHVDAAVNYSAGHYVRDAAQVLDEVRREGRLPVFIGGTGLYFKALTRGLSAVPPVPDDIREAVRLKLDRDGVEALHAELARRDAAAAARLNVRDRTRIARALEVIEATGRPLADWHAETTPPLLPPERTHALFIAPEREALYARIDARFETMLEAGALAEVERLAARGLDPLLPAMKAHGVPALIRYLRGEITREEAATIGKADTRHYAKRQFTWFRHQLPEFEWMSPEAAKGLVRALKVR.

An ATP-binding site is contributed by 14-21; the sequence is GPTASGKS. Position 16-21 (16-21) interacts with substrate; it reads TASGKS. The interval 39 to 42 is interaction with substrate tRNA; it reads DSMQ.

This sequence belongs to the IPP transferase family. Monomer. It depends on Mg(2+) as a cofactor.

The catalysed reaction is adenosine(37) in tRNA + dimethylallyl diphosphate = N(6)-dimethylallyladenosine(37) in tRNA + diphosphate. Functionally, catalyzes the transfer of a dimethylallyl group onto the adenine at position 37 in tRNAs that read codons beginning with uridine, leading to the formation of N6-(dimethylallyl)adenosine (i(6)A). The protein is tRNA dimethylallyltransferase of Bradyrhizobium sp. (strain ORS 278).